Here is an 81-residue protein sequence, read N- to C-terminus: Small ribosomal subunit protein bS16 (81 aa).

The protein belongs to the bacterial ribosomal protein bS16 family.

The protein is Small ribosomal subunit protein bS16 of Teredinibacter turnerae (strain ATCC 39867 / T7901).